The following is a 363-amino-acid chain: Ly6/PLAUR domain-containing protein 3 (363 aa).

A signal peptide spans 1-32; sequence MDAARRGDTQPVMWTTGWLLLLPLLLCEGAQA. The UPAR/Ly6 1 domain maps to 35–128; it reads CYSCVQKADD…LNLTLRGLNP (94 aa). Residues asparagine 120, asparagine 131, asparagine 178, and asparagine 185 are each glycosylated (N-linked (GlcNAc...) asparagine). A UPAR/Ly6 2 domain is found at 142 to 224; that stretch reads CYSCVGLSRE…GSCCQGPRCN (83 aa). The segment covering 238–248 has biased composition (pro residues); sequence PPLVLLPPPTT. 2 disordered regions span residues 238-287 and 301-336; these read PPLV…TSPH and LSGGAAGHGGTAGHGGAAGHQDRSNMEKYPGKGGAQ. Residues 249-278 are compositionally biased toward low complexity; that stretch reads AAPSTRAQNSSSTTSTAAPTTTTSIIKPTT. Residues 304–318 are compositionally biased toward gly residues; it reads GAAGHGGTAGHGGAA. A compositionally biased stretch (basic and acidic residues) spans 320–330; the sequence is HQDRSNMEKYP. Serine 343 carries GPI-anchor amidated serine lipidation. The propeptide at 344 to 363 is removed in mature form; that stretch reads GTLGSWLSAVLLTVVAGAML.

Binds laminin-1 and laminin-5. Interacts with LGALS3. Interacts with AGR2 and AGR3.

The protein resides in the cell membrane. Functionally, supports cell migration. May be involved in tumor progression. This Mus musculus (Mouse) protein is Ly6/PLAUR domain-containing protein 3 (Lypd3).